The chain runs to 274 residues: ATP synthase subunit a (274 aa).

5 helical membrane-spanning segments follow: residues T43–F63, V103–L123, V144–I164, L223–P243, and A245–V265.

It belongs to the ATPase A chain family. In terms of assembly, F-type ATPases have 2 components, CF(1) - the catalytic core - and CF(0) - the membrane proton channel. CF(1) has five subunits: alpha(3), beta(3), gamma(1), delta(1), epsilon(1). CF(0) has three main subunits: a(1), b(2) and c(9-12). The alpha and beta chains form an alternating ring which encloses part of the gamma chain. CF(1) is attached to CF(0) by a central stalk formed by the gamma and epsilon chains, while a peripheral stalk is formed by the delta and b chains.

Its subcellular location is the cell inner membrane. Its function is as follows. Key component of the proton channel; it plays a direct role in the translocation of protons across the membrane. The chain is ATP synthase subunit a from Photorhabdus laumondii subsp. laumondii (strain DSM 15139 / CIP 105565 / TT01) (Photorhabdus luminescens subsp. laumondii).